A 358-amino-acid polypeptide reads, in one-letter code: Fructose-bisphosphate aldolase 7, cytosolic (358 aa).

The residue at position 2 (serine 2) is an N-acetylserine. Arginine 52 is a substrate binding site. Position 68 is an S-glutathionyl cysteine; transient (cysteine 68). Lysine 142 contributes to the substrate binding site. Cysteine 173 is subject to S-glutathionyl cysteine; transient; alternate. At cysteine 173 the chain carries S-nitrosocysteine; transient; alternate. The Proton acceptor role is filled by glutamate 183. The Schiff-base intermediate with dihydroxyacetone-P role is filled by lysine 225. Residue 266–268 (SGI) coordinates substrate.

Belongs to the class I fructose-bisphosphate aldolase family. Homotetramer. S-glutathionylated at Cys-68 and Cys-173. In terms of processing, S-nitrosylated at Cys-173. As to expression, highly expressed in flowers, and at lower levels in rosettes leaves and cauline leaves.

It is found in the cytoplasm. It localises to the cytosol. The catalysed reaction is beta-D-fructose 1,6-bisphosphate = D-glyceraldehyde 3-phosphate + dihydroxyacetone phosphate. Its pathway is carbohydrate degradation; glycolysis; D-glyceraldehyde 3-phosphate and glycerone phosphate from D-glucose: step 4/4. Plays a key role in glycolysis and gluconeogenesis. The polypeptide is Fructose-bisphosphate aldolase 7, cytosolic (Arabidopsis thaliana (Mouse-ear cress)).